A 136-amino-acid polypeptide reads, in one-letter code: Peptide methionine sulfoxide reductase B5 (136 aa).

Residues 14-135 (DEEWRAVLSP…NSVSIKFTPA (122 aa)) enclose the MsrB domain. Positions 53, 56, 99, and 102 each coordinate Zn(2+). Cys71 and Cys124 are joined by a disulfide. Residue Cys124 is the Nucleophile of the active site.

It belongs to the MsrB Met sulfoxide reductase family. Zn(2+) is required as a cofactor.

It is found in the cytoplasm. It localises to the cytosol. The catalysed reaction is L-methionyl-[protein] + [thioredoxin]-disulfide + H2O = L-methionyl-(R)-S-oxide-[protein] + [thioredoxin]-dithiol. Its function is as follows. Catalyzes the reduction of methionine sulfoxide (MetSO) to methionine in proteins. Plays a protective role against oxidative stress by restoring activity to proteins that have been inactivated by methionine oxidation. MSRB family specifically reduces the MetSO R-enantiomer. The sequence is that of Peptide methionine sulfoxide reductase B5 (MSRB5) from Oryza sativa subsp. japonica (Rice).